We begin with the raw amino-acid sequence, 308 residues long: Olfactory receptor 6F1 (308 aa).

The Extracellular portion of the chain corresponds to 1 to 25 (MDTGNKTLPQDFLLLGFPGSQTLQL). N5 carries N-linked (GlcNAc...) asparagine glycosylation. A helical transmembrane segment spans residues 26 to 46 (SLFMLFLVMYILTVSGNVAIL). Residues 47–54 (MLVSTSHQ) are Cytoplasmic-facing. Residues 55–75 (LHTPMYFFLSNLSFLEIWYTT) traverse the membrane as a helical segment. Residues 76–99 (AAVPKALAILLGRSQTISFTSCLL) lie on the Extracellular side of the membrane. C97 and C189 are oxidised to a cystine. Residues 100 to 120 (QMYFVFSLGCTEYFLLAAMAY) form a helical membrane-spanning segment. Over 121–139 (DRCLAICYPLHYGAIMSSL) the chain is Cytoplasmic. Residues 140-160 (LSAQLALGSWVCGFVAIAVPT) traverse the membrane as a helical segment. Over 161–197 (ALISGLSFCGPRAINHFFCDIAPWIALACTNTQAVEL) the chain is Extracellular. The chain crosses the membrane as a helical span at residues 198 to 217 (VAFVIAVVVILSSCLITFVS). Residues 218–237 (YVYIISTILRIPSASGRSKA) are Cytoplasmic-facing. The helical transmembrane segment at 238–258 (FSTCSSHLTVVLIWYGSTVFL) threads the bilayer. At 259–271 (HVRTSIKDALDLI) the chain is on the extracellular side. Residues 272–292 (KAVHVLNTVVTPVLNPFIYTL) traverse the membrane as a helical segment. The Cytoplasmic portion of the chain corresponds to 293–308 (RNKEVRETLLKKWKGK).

This sequence belongs to the G-protein coupled receptor 1 family.

It localises to the cell membrane. Functionally, odorant receptor. The polypeptide is Olfactory receptor 6F1 (OR6F1) (Homo sapiens (Human)).